The chain runs to 537 residues: Membrane protein insertase YidC (537 aa).

The next 5 membrane-spanning stretches (helical) occupy residues 6–26, 341–363, 411–431, 449–469, and 490–510; these read SLLALALLFISFLVYQQWEID, LVSNWGLAIIGVTLVVKAILYPL, LGGCLPLLIQMPIFIALYWTF, LSAQDPYYILPLLMGGSMFLL, and PVIFTVFFLWFPAGLVLYWLV.

It belongs to the OXA1/ALB3/YidC family. Type 1 subfamily. As to quaternary structure, interacts with the Sec translocase complex via SecD. Specifically interacts with transmembrane segments of nascent integral membrane proteins during membrane integration.

It localises to the cell inner membrane. Its function is as follows. Required for the insertion and/or proper folding and/or complex formation of integral membrane proteins into the membrane. Involved in integration of membrane proteins that insert both dependently and independently of the Sec translocase complex, as well as at least some lipoproteins. Aids folding of multispanning membrane proteins. The protein is Membrane protein insertase YidC of Actinobacillus succinogenes (strain ATCC 55618 / DSM 22257 / CCUG 43843 / 130Z).